A 235-amino-acid polypeptide reads, in one-letter code: Protocatechuate 3,4-dioxygenase beta chain (235 aa).

Fe cation-binding residues include Y107, Y146, H159, and H161.

The protein belongs to the intradiol ring-cleavage dioxygenase family. In terms of assembly, the enzyme is an oligomer of 12 copies of the alpha and beta chains. The cofactor is Fe(3+).

It carries out the reaction 3,4-dihydroxybenzoate + O2 = 3-carboxy-cis,cis-muconate + 2 H(+). It participates in aromatic compound metabolism; beta-ketoadipate pathway; 3-carboxy-cis,cis-muconate from 3,4-dihydroxybenzoate: step 1/1. Its function is as follows. Plays an essential role in the utilization of numerous aromatic and hydroaromatic compounds via the beta-ketoadipate pathway. In Burkholderia cepacia (Pseudomonas cepacia), this protein is Protocatechuate 3,4-dioxygenase beta chain (pcaH).